The primary structure comprises 1194 residues: F-box only protein 38 (1194 aa).

The F-box domain maps to 30-75 (MNQLSHEVLCHIFRYLPLQDIMCMECLSRKLKEAVTLYLRVVRVVD). The interaction with KLF7 stretch occupies residues 59–119 (KLKEAVTLYL…LHPRYLERRR (61 aa)). 3 short sequence motifs (nuclear export signal) span residues 194-201 (LHLVGVNV), 307-316 (LEVDLGYLII), and 451-460 (LLPSLEFISL). Disordered regions lie at residues 487 to 529 (ALVS…FRPD), 577 to 776 (EEQA…DAES), 793 to 879 (RTGR…RARS), and 896 to 915 (KPCH…STSD). A compositionally biased stretch (low complexity) spans 493–510 (NSNNDNDNNAPNNNANLH). At T592 the chain carries Phosphothreonine. S599, S601, and S607 each carry phosphoserine. Over residues 599–609 (SESDDEEDSLE) the composition is skewed to acidic residues. Composition is skewed to basic and acidic residues over residues 622 to 631 (RYSEREEKTG) and 683 to 701 (IKAD…KSKD). A compositionally biased stretch (low complexity) spans 705–728 (SCSSSSSSTAASTAGNASSPSTAS). A phosphoserine mark is found at S742 and S746. The segment covering 764-774 (EDSEAMEEGDA) has biased composition (acidic residues). A compositionally biased stretch (basic and acidic residues) spans 793–804 (RTGRCSDEERPS). Residues 855 to 867 (SSQPESCDVQSNE) show a composition bias toward polar residues. Basic residues predominate over residues 896–906 (KPCHAMKRKRT). Residues 902–905 (KRKR) carry the Nuclear localization signal motif.

Part of the SCF (SKP1-CUL1-F-box) E3 ubiquitin-protein ligase complex SCF(FBXO38) composed of CUL1, SKP1, RBX1 and FBXO38. Interacts with KLF7. Interacts with PDCD1/PD-1. In terms of tissue distribution, expressed at high levels in embryo (developing brain, spinal cord, branchial arms and limbs). Widely expressed at low levels in adult tissues, with highest expression in testis. Expressed in postmeiotic spermatids.

It localises to the cytoplasm. The protein resides in the cytosol. It is found in the nucleus. The protein operates within protein modification; protein ubiquitination. Its function is as follows. Substrate recognition component of a SCF (SKP1-CUL1-F-box protein) E3 ubiquitin-protein ligase complex which mediates the ubiquitination and subsequent proteasomal degradation of PDCD1/PD-1, thereby regulating T-cells-mediated immunity. Required for anti-tumor activity of T-cells by promoting the degradation of PDCD1/PD-1; the PDCD1-mediated inhibitory pathway being exploited by tumors to attenuate anti-tumor immunity and facilitate tumor survival. May indirectly stimulate the activity of transcription factor KLF7, a regulator of neuronal differentiation, without promoting KLF7 ubiquitination. The chain is F-box only protein 38 from Mus musculus (Mouse).